Reading from the N-terminus, the 282-residue chain is Purine nucleoside phosphorylase (282 aa).

Residues Ser-46, His-78, and 103 to 105 (RTH) contribute to the phosphate site. The active site involves Glu-204. An a purine D-ribonucleoside-binding site is contributed by Glu-204. A phosphate-binding site is contributed by Ser-223. Asn-246 is a binding site for a purine D-ribonucleoside.

It belongs to the PNP/MTAP phosphorylase family. As to quaternary structure, homotrimer.

The enzyme catalyses a purine 2'-deoxy-D-ribonucleoside + phosphate = a purine nucleobase + 2-deoxy-alpha-D-ribose 1-phosphate. It participates in purine metabolism; purine nucleoside salvage. Its function is as follows. The purine nucleoside phosphorylases catalyze the phosphorolytic breakdown of the N-glycosidic bond in the beta-(deoxy)ribonucleoside molecules, with the formation of the corresponding free purine bases and pentose-1-phosphate. Cleaves guanosine, inosine, 2'-deoxyguanosine and 2'-deoxyinosine. In Cellulomonas sp, this protein is Purine nucleoside phosphorylase (punA).